We begin with the raw amino-acid sequence, 790 residues long: Kinesin-like protein KIF9 (790 aa).

A Kinesin motor domain is found at 6–340 (KVHAFVRVKP…LRFASRMKLV (335 aa)). Residues 12-14 (RVK) and 93-100 (GQTGAGKT) each bind ATP. Residues 342 to 380 (TEPAINEKYDAERMVKNLEKELALLKQELAIHDSLTNRT) are a coiled coil. The segment at 477 to 578 (QNFGLGVAPF…IRPDTPPSKP (102 aa)) is disordered. Residues 525–534 (VSTSKTQLVP) show a composition bias toward polar residues. Thr530 is modified (phosphothreonine). Basic and acidic residues-rich tracts occupy residues 537–552 (KDGDVKDMLSRDRETS) and 561–570 (SPKEELRPIR). The residue at position 546 (Ser546) is a Phosphoserine. A coiled-coil region spans residues 658–690 (LLILKLKDLKKQYRSEYQDLRDLRAEIQYCQHL).

The protein belongs to the TRAFAC class myosin-kinesin ATPase superfamily. Kinesin family. In terms of assembly, interacts with HYDIN.

The protein localises to the cytoplasm. Its subcellular location is the cytoskeleton. The protein resides in the cell projection. It localises to the cilium. It is found in the flagellum. The protein localises to the flagellum axoneme. Its function is as follows. Essential for normal male fertility and for progressive motility of spermatozoa. The sequence is that of Kinesin-like protein KIF9 (KIF9) from Homo sapiens (Human).